A 155-amino-acid polypeptide reads, in one-letter code: Large ribosomal subunit protein eL19 (155 aa).

The segment covering Val-66–Gly-84 has biased composition (basic residues). The tract at residues Val-66–Val-85 is disordered.

It belongs to the eukaryotic ribosomal protein eL19 family. As to quaternary structure, part of the 50S ribosomal subunit.

Functionally, binds to the 23S rRNA. The protein is Large ribosomal subunit protein eL19 of Aeropyrum pernix (strain ATCC 700893 / DSM 11879 / JCM 9820 / NBRC 100138 / K1).